A 185-amino-acid polypeptide reads, in one-letter code: Translation initiation factor IF-3 (185 aa).

The protein belongs to the IF-3 family. In terms of assembly, monomer.

The protein resides in the cytoplasm. In terms of biological role, IF-3 binds to the 30S ribosomal subunit and shifts the equilibrium between 70S ribosomes and their 50S and 30S subunits in favor of the free subunits, thus enhancing the availability of 30S subunits on which protein synthesis initiation begins. This Rickettsia felis (strain ATCC VR-1525 / URRWXCal2) (Rickettsia azadi) protein is Translation initiation factor IF-3.